A 455-amino-acid chain; its full sequence is Membrane-bound lytic murein transglycosylase F (455 aa).

The N-terminal stretch at 1-21 is a signal peptide; it reads MPKSAVSLFAILLLAASVITA. The tract at residues 22–264 is non-LT domain; it reads CSPQTRPDAM…HIKEQHFGHV (243 aa). The interval 265–455 is LT domain; sequence KQFNYVTTSL…LKYLDEQGRL (191 aa). E309 is an active-site residue.

It in the N-terminal section; belongs to the bacterial solute-binding protein 3 family. The protein in the C-terminal section; belongs to the transglycosylase Slt family.

It is found in the cell outer membrane. It carries out the reaction Exolytic cleavage of the (1-&gt;4)-beta-glycosidic linkage between N-acetylmuramic acid (MurNAc) and N-acetylglucosamine (GlcNAc) residues in peptidoglycan, from either the reducing or the non-reducing ends of the peptidoglycan chains, with concomitant formation of a 1,6-anhydrobond in the MurNAc residue.. Functionally, murein-degrading enzyme that degrades murein glycan strands and insoluble, high-molecular weight murein sacculi, with the concomitant formation of a 1,6-anhydromuramoyl product. Lytic transglycosylases (LTs) play an integral role in the metabolism of the peptidoglycan (PG) sacculus. Their lytic action creates space within the PG sacculus to allow for its expansion as well as for the insertion of various structures such as secretion systems and flagella. The protein is Membrane-bound lytic murein transglycosylase F of Idiomarina loihiensis (strain ATCC BAA-735 / DSM 15497 / L2-TR).